A 505-amino-acid chain; its full sequence is MSRITTSLDHYEVWFLTGSQNLYGEETLQQVAEQSQEIARQLEEASDIPVRVVWKPVLKDSDSIRRMALEANASDRTIGLIAWMHTFSPAKMWIQGLDALQKPFLHLHTQANVALPWSSIDMDFMNLNQAAHGDREFGYIQSRLGVVRKTVVGHVSTESVRDSIGTWMRAAAGWAAVHELKVARFGDNMRNVAVTEGDKTEAELKFGVSVNTWGVNDLVERVDAATDAEIDALVDEYERLYDIAPELQRGGERHESLRYGAAIEVGLRSFLEEGGFGAFTTSFEDLGGLRQLPGLAVQRLMAEGYGFGAEGDWKTAVLIRAAKVMGSGLPGGASLMEDYTYHLVPGEEKILGAHMLEICPTLTTGRPSLEIHPLGIGGREDPVRLVFDTDPGPAVVVAMSDMRERFRIVANVVEVVPLDEPLPNLPVARAVWKPAPDLATSAAAWLTAGAAHHTVMSTQVGVEVFEDFAEIARTELLVIDEDTTLKGFTKEVRWNQAYHRLAQGL.

Positions 310, 337, 354, and 453 each coordinate Mn(2+).

It belongs to the arabinose isomerase family. It depends on Mn(2+) as a cofactor.

The catalysed reaction is beta-L-arabinopyranose = L-ribulose. It participates in carbohydrate degradation; L-arabinose degradation via L-ribulose; D-xylulose 5-phosphate from L-arabinose (bacterial route): step 1/3. In terms of biological role, catalyzes the conversion of L-arabinose to L-ribulose. The sequence is that of L-arabinose isomerase from Clavibacter sepedonicus (Clavibacter michiganensis subsp. sepedonicus).